The following is a 155-amino-acid chain: Aspartate carbamoyltransferase regulatory chain (155 aa).

Residues Cys110, Cys115, Cys139, and Cys142 each coordinate Zn(2+).

The protein belongs to the PyrI family. Contains catalytic and regulatory chains. Zn(2+) serves as cofactor.

Its function is as follows. Involved in allosteric regulation of aspartate carbamoyltransferase. The sequence is that of Aspartate carbamoyltransferase regulatory chain from Yersinia pestis bv. Antiqua (strain Antiqua).